Reading from the N-terminus, the 562-residue chain is Nucleoprotein (562 aa).

The segment at 53 to 238 (MRRVKRDDSD…ITQEESQINI (186 aa)) is binding site for the cap structure m7GTP. Positions 381 and 383 each coordinate Mn(2+). Zn(2+) is bound by residues Glu391, Cys498, His501, and Cys522. Asp526 is a Mn(2+) binding site.

This sequence belongs to the arenaviridae nucleocapsid protein family. In terms of assembly, homomultimerizes to form the nucleocapsid. Binds to viral genomic RNA. Interacts with glycoprotein G2. Interacts with protein Z; this interaction probably directs the encapsidated genome to budding sites. Interacts with protein L; this interaction does not interfere with Z-L interaction. Interacts with host IKBKE (via Protein kinase domain); the interaction inhibits IKBKE kinase activity.

The protein localises to the virion. Its subcellular location is the host cytoplasm. Its function is as follows. Encapsidates the genome, protecting it from nucleases. The encapsidated genomic RNA is termed the nucleocapsid (NC). Serves as template for viral transcription and replication. The increased presence of protein N in host cell does not seem to trigger the switch from transcription to replication as observed in other negative strain RNA viruses. Through the interaction with host IKBKE, strongly inhibits the phosphorylation and nuclear translocation of host IRF3, a protein involved in interferon activation pathway, leading to the inhibition of interferon-beta and IRF3-dependent promoters activation. Also encodes a functional 3'-5' exoribonuclease that degrades preferentially dsRNA substrates and thereby participates in the suppression of interferon induction. The chain is Nucleoprotein from Neotoma (wood rats).